Consider the following 100-residue polypeptide: Small ribosomal subunit protein uS14c (100 aa).

The protein belongs to the universal ribosomal protein uS14 family. In terms of assembly, part of the 30S ribosomal subunit.

It is found in the plastid. The protein resides in the chloroplast. Its function is as follows. Binds 16S rRNA, required for the assembly of 30S particles. This Nephroselmis olivacea (Green alga) protein is Small ribosomal subunit protein uS14c.